The chain runs to 171 residues: Ribosome-binding factor A (171 aa).

Residues 126–138 (VREGAKHAGDADP) show a composition bias toward basic and acidic residues. Positions 126 to 171 (VREGAKHAGDADPYRVSGVEEEAGGSGEVQAEFDAEDTGDRNRQDD) are disordered.

This sequence belongs to the RbfA family. In terms of assembly, monomer. Binds 30S ribosomal subunits, but not 50S ribosomal subunits or 70S ribosomes.

It localises to the cytoplasm. Its function is as follows. One of several proteins that assist in the late maturation steps of the functional core of the 30S ribosomal subunit. Associates with free 30S ribosomal subunits (but not with 30S subunits that are part of 70S ribosomes or polysomes). Required for efficient processing of 16S rRNA. May interact with the 5'-terminal helix region of 16S rRNA. The chain is Ribosome-binding factor A from Mycobacterium sp. (strain JLS).